The sequence spans 178 residues: Hypoxanthine phosphoribosyltransferase (178 aa).

Diphosphate-binding residues include Arg-43 and Gly-44. Glu-99 lines the GMP pocket. Glu-99 provides a ligand contact to IMP. 2 residues coordinate Mg(2+): Glu-99 and Asp-100. Asp-103 functions as the Proton acceptor in the catalytic mechanism. GMP-binding positions include 103–108 (DSGNTL), Lys-131, and Asp-159. IMP contacts are provided by residues 103–108 (DSGNTL) and Lys-131. Arg-165 serves as a coordination point for diphosphate.

Belongs to the purine/pyrimidine phosphoribosyltransferase family. Homotetramer. It depends on Mg(2+) as a cofactor.

Its subcellular location is the cytoplasm. The enzyme catalyses IMP + diphosphate = hypoxanthine + 5-phospho-alpha-D-ribose 1-diphosphate. It catalyses the reaction GMP + diphosphate = guanine + 5-phospho-alpha-D-ribose 1-diphosphate. Its pathway is purine metabolism; IMP biosynthesis via salvage pathway; IMP from hypoxanthine: step 1/1. Functionally, purine salvage pathway enzyme which catalyzes the transfer of the ribosyl-5-phosphate group from 5-phospho-alpha-D-ribose 1-diphosphate (PRPP) to the N9 position of hypoxanthine to yield IMP (inosine 5'-monophosphate). To a lesser extent, can also act on guanine leading to GMP, but shows a highly less efficient activity with xanthine. This is Hypoxanthine phosphoribosyltransferase (hpt) from Shigella flexneri.